The sequence spans 156 residues: Ribosome-binding factor A (156 aa).

The disordered stretch occupies residues 129–156; sequence AGEAQPYRVEEEPGDSEDETPPSSQDQR.

This sequence belongs to the RbfA family. As to quaternary structure, monomer. Binds 30S ribosomal subunits, but not 50S ribosomal subunits or 70S ribosomes.

Its subcellular location is the cytoplasm. Its function is as follows. One of several proteins that assist in the late maturation steps of the functional core of the 30S ribosomal subunit. Associates with free 30S ribosomal subunits (but not with 30S subunits that are part of 70S ribosomes or polysomes). Required for efficient processing of 16S rRNA. May interact with the 5'-terminal helix region of 16S rRNA. The chain is Ribosome-binding factor A from Salinispora arenicola (strain CNS-205).